Consider the following 427-residue polypeptide: NAD kinase 2, mitochondrial (427 aa).

The transit peptide at 1–33 (MSLCLRLLCSVCGAAALRVPLGVSSLRALSGSA) directs the protein to the mitochondrion.

The protein belongs to the NAD kinase family. In terms of assembly, homodimer.

The protein localises to the mitochondrion. The catalysed reaction is NAD(+) + ATP = ADP + NADP(+) + H(+). Functionally, mitochondrial NAD(+) kinase that phosphorylates NAD(+) to yield NADP(+). Can use both ATP or inorganic polyphosphate as the phosphoryl donor. This chain is NAD kinase 2, mitochondrial (nadk2), found in Xenopus tropicalis (Western clawed frog).